A 271-amino-acid polypeptide reads, in one-letter code: Probable diacyglycerol O-acyltransferase tgs3 (271 aa).

Belongs to the long-chain O-acyltransferase family.

The catalysed reaction is an acyl-CoA + a 1,2-diacyl-sn-glycerol = a triacyl-sn-glycerol + CoA. It functions in the pathway glycerolipid metabolism; triacylglycerol biosynthesis. In terms of biological role, catalyzes the terminal and only committed step in triacylglycerol synthesis by using diacylglycerol and fatty acyl CoA as substrates. Required for storage lipid synthesis. The protein is Probable diacyglycerol O-acyltransferase tgs3 (tgs3) of Mycobacterium tuberculosis (strain CDC 1551 / Oshkosh).